Here is a 403-residue protein sequence, read N- to C-terminus: Phosphopentomutase 2 (403 aa).

Mn(2+)-binding residues include D13, D298, H303, D339, H340, and H351.

Belongs to the phosphopentomutase family. The cofactor is Mn(2+).

The protein localises to the cytoplasm. It catalyses the reaction 2-deoxy-alpha-D-ribose 1-phosphate = 2-deoxy-D-ribose 5-phosphate. The enzyme catalyses alpha-D-ribose 1-phosphate = D-ribose 5-phosphate. It functions in the pathway carbohydrate degradation; 2-deoxy-D-ribose 1-phosphate degradation; D-glyceraldehyde 3-phosphate and acetaldehyde from 2-deoxy-alpha-D-ribose 1-phosphate: step 1/2. Isomerase that catalyzes the conversion of deoxy-ribose 1-phosphate (dRib-1-P) and ribose 1-phosphate (Rib-1-P) to deoxy-ribose 5-phosphate (dRib-5-P) and ribose 5-phosphate (Rib-5-P), respectively. The sequence is that of Phosphopentomutase 2 from Streptococcus agalactiae serotype Ia (strain ATCC 27591 / A909 / CDC SS700).